The sequence spans 322 residues: Serine/threonine-protein phosphatase PP1 isozyme 6 (322 aa).

Met1 carries the post-translational modification N-acetylmethionine. Residues Asp61, His63, Asp89, and Asn121 each coordinate Mn(2+). His122 functions as the Proton donor in the catalytic mechanism. Residues His170 and His245 each contribute to the Mn(2+) site. A disordered region spans residues 303–322 (GFNNNVPRPGTPPHKGGKGR).

It belongs to the PPP phosphatase family. PP-1 subfamily. Mn(2+) is required as a cofactor. As to expression, strongly up-regulated within developing flowers, especially in the tapetum, the developing and mature pollen and in the ovaries.

The protein resides in the nucleus. Its subcellular location is the cytoplasm. The catalysed reaction is O-phospho-L-seryl-[protein] + H2O = L-seryl-[protein] + phosphate. The enzyme catalyses O-phospho-L-threonyl-[protein] + H2O = L-threonyl-[protein] + phosphate. With respect to regulation, phosphatase activity is strongly reduced by the protein phosphatase inhibitor 2 (I-2). Serine/threonine-protein phosphatase that possesses phosphatase activity toward para-nitrophenyl phosphate (pNPP) in vitro. This is Serine/threonine-protein phosphatase PP1 isozyme 6 from Arabidopsis thaliana (Mouse-ear cress).